A 256-amino-acid polypeptide reads, in one-letter code: Tumor necrosis factor receptor superfamily member 9 (256 aa).

Residues 1 to 23 (MGNNCYNVVVIVLLLVGCEKVGA) form the signal peptide. 4 TNFR-Cys repeats span residues 24–45 (VQNS…PVCK), 46–85 (SCPP…NAEC), 86–117 (ECIE…QGCK), and 118–159 (TCSL…VVCG). Residues 24–187 (VQNSCDNCQP…GPGGHSLQVL (164 aa)) lie on the Extracellular side of the membrane. Intrachain disulfides connect C28-C37, C31-C44, C47-C61, C64-C77, C67-C85, C87-C93, C98-C105, C101-C116, and C119-C133. N128 and N138 each carry an N-linked (GlcNAc...) asparagine glycan. A disulfide bridge connects residues C139 and C158. The chain crosses the membrane as a helical span at residues 188–208 (TLFLALTSALLLALIFITLLF). Residues 209 to 256 (SVLKWIRKKFPHIFKQPFKKTTGAAQEEDACSCRCPQEEEGGGGGYEL) lie on the Cytoplasmic side of the membrane.

As to quaternary structure, predominantly homodimeric, but may also exist as a monomer. Associates with p56-LCK. Interacts with TRAF1, TRAF2 and TRAF3. In terms of tissue distribution, expressed in activated thymocytes, splenic T cells, CD4(+), and CD8(+) T-cells.

It is found in the cell membrane. Functionally, receptor for TNFSF9/4-1BBL. Conveys a signal that enhances CD8(+) T-cell survival, cytotoxicity, and mitochondrial activity, thereby promoting immunity against viruses and tumors. The protein is Tumor necrosis factor receptor superfamily member 9 (Tnfrsf9) of Mus musculus (Mouse).